Reading from the N-terminus, the 343-residue chain is Anthranilate phosphoribosyltransferase (343 aa).

5-phospho-alpha-D-ribose 1-diphosphate contacts are provided by residues G77, G80 to D81, T85, N87 to T90, K105 to G113, and S117. G77 is an anthranilate binding site. S89 is a binding site for Mg(2+). N108 lines the anthranilate pocket. Position 163 (R163) interacts with anthranilate. Mg(2+) contacts are provided by D222 and E223.

The protein belongs to the anthranilate phosphoribosyltransferase family. As to quaternary structure, homodimer. Mg(2+) is required as a cofactor.

The catalysed reaction is N-(5-phospho-beta-D-ribosyl)anthranilate + diphosphate = 5-phospho-alpha-D-ribose 1-diphosphate + anthranilate. It functions in the pathway amino-acid biosynthesis; L-tryptophan biosynthesis; L-tryptophan from chorismate: step 2/5. Functionally, catalyzes the transfer of the phosphoribosyl group of 5-phosphorylribose-1-pyrophosphate (PRPP) to anthranilate to yield N-(5'-phosphoribosyl)-anthranilate (PRA). In Cenarchaeum symbiosum (strain A), this protein is Anthranilate phosphoribosyltransferase.